Here is a 499-residue protein sequence, read N- to C-terminus: Probable cytosol aminopeptidase (499 aa).

2 residues coordinate Mn(2+): Lys-263 and Asp-268. Lys-275 is a catalytic residue. Mn(2+) is bound by residues Asp-286, Asp-345, and Glu-347. Arg-349 is a catalytic residue.

This sequence belongs to the peptidase M17 family. Requires Mn(2+) as cofactor.

It is found in the cytoplasm. It carries out the reaction Release of an N-terminal amino acid, Xaa-|-Yaa-, in which Xaa is preferably Leu, but may be other amino acids including Pro although not Arg or Lys, and Yaa may be Pro. Amino acid amides and methyl esters are also readily hydrolyzed, but rates on arylamides are exceedingly low.. The enzyme catalyses Release of an N-terminal amino acid, preferentially leucine, but not glutamic or aspartic acids.. Functionally, presumably involved in the processing and regular turnover of intracellular proteins. Catalyzes the removal of unsubstituted N-terminal amino acids from various peptides. In Bradyrhizobium sp. (strain BTAi1 / ATCC BAA-1182), this protein is Probable cytosol aminopeptidase.